The following is a 382-amino-acid chain: Anhydro-N-acetylmuramic acid kinase (382 aa).

15-22 (GTSLDGVD) lines the ATP pocket.

The protein belongs to the anhydro-N-acetylmuramic acid kinase family.

It carries out the reaction 1,6-anhydro-N-acetyl-beta-muramate + ATP + H2O = N-acetyl-D-muramate 6-phosphate + ADP + H(+). Its pathway is amino-sugar metabolism; 1,6-anhydro-N-acetylmuramate degradation. It participates in cell wall biogenesis; peptidoglycan recycling. Catalyzes the specific phosphorylation of 1,6-anhydro-N-acetylmuramic acid (anhMurNAc) with the simultaneous cleavage of the 1,6-anhydro ring, generating MurNAc-6-P. Is required for the utilization of anhMurNAc either imported from the medium or derived from its own cell wall murein, and thus plays a role in cell wall recycling. This chain is Anhydro-N-acetylmuramic acid kinase, found in Haemophilus influenzae (strain ATCC 51907 / DSM 11121 / KW20 / Rd).